A 65-amino-acid polypeptide reads, in one-letter code: Large ribosomal subunit protein bL35 (65 aa).

A compositionally biased stretch (basic residues) spans 1-16; the sequence is MPKQKTHRASAKRFKR. Residues 1-20 form a disordered region; sequence MPKQKTHRASAKRFKRTGSG.

It belongs to the bacterial ribosomal protein bL35 family.

This Streptococcus pyogenes serotype M1 protein is Large ribosomal subunit protein bL35.